The sequence spans 457 residues: Glycerol-3-phosphate acyltransferase 3 (457 aa).

The chain crosses the membrane as a helical span at residues 14-34; sequence WLTLVGSLILLPSAFGLSLGI. S68 and S77 each carry phosphoserine. Transmembrane regions (helical) follow at residues 137–157 and 161–181; these read ISPK…CFLL and VTLA…VGQL. An HXXXXD motif motif is present at residues 229 to 234; it reads HTSPID. The segment at 429 to 457 is disordered; sequence GNGSPSLALDSSTVDNHGSPEPAFRSESL. Residues 431 to 444 show a composition bias toward polar residues; it reads GSPSLALDSSTVDN.

The protein belongs to the 1-acyl-sn-glycerol-3-phosphate acyltransferase family.

It is found in the endoplasmic reticulum membrane. It catalyses the reaction sn-glycerol 3-phosphate + an acyl-CoA = a 1-acyl-sn-glycero-3-phosphate + CoA. The catalysed reaction is a 1-acyl-sn-glycero-3-phosphate + an acyl-CoA = a 1,2-diacyl-sn-glycero-3-phosphate + CoA. It carries out the reaction dodecanoyl-CoA + sn-glycerol 3-phosphate = 1-dodecanoyl-sn-glycerol 3-phosphate + CoA. The enzyme catalyses sn-glycerol 3-phosphate + hexadecanoyl-CoA = 1-hexadecanoyl-sn-glycero-3-phosphate + CoA. It catalyses the reaction sn-glycerol 3-phosphate + (9Z)-octadecenoyl-CoA = 1-(9Z-octadecenoyl)-sn-glycero-3-phosphate + CoA. The catalysed reaction is (9Z,12Z)-octadecadienoyl-CoA + sn-glycerol 3-phosphate = 1-(9Z,12Z)-octadecadienoyl-sn-glycero-3-phosphate + CoA. It carries out the reaction 1-tetradecanoyl-sn-glycerol 3-phosphate + (9Z)-octadecenoyl-CoA = 1-tetradecanoyl-2-(9Z)-octadecenoyl-sn-glycero-3-phosphate + CoA. The enzyme catalyses 1-hexadecanoyl-sn-glycero-3-phosphate + (9Z)-octadecenoyl-CoA = 1-hexadecanoyl-2-(9Z-octadecenoyl)-sn-glycero-3-phosphate + CoA. It catalyses the reaction 1-(9Z-octadecenoyl)-sn-glycero-3-phosphate + (9Z)-octadecenoyl-CoA = 1,2-di-(9Z-octadecenoyl)-sn-glycero-3-phosphate + CoA. The catalysed reaction is 1-(6Z,9Z,12Z-octadecatrienoyl)-sn-glycero-3-phosphate + (9Z)-octadecenoyl-CoA = (6Z,9Z,12Z)-octadecatrienoyl-2-(9Z)-octadecenoyl-sn-glycero-3-phosphate + CoA. It carries out the reaction 1-(9Z,12Z,15Z)-octadecatrienoyl-sn-glycero-3-phosphate + (9Z)-octadecenoyl-CoA = 1-(9Z,12Z,15Z)-octadecatrienoyl-2-(9Z)-octadecenoyl-sn-glycero-3-phosphate + CoA. The enzyme catalyses 1-(9Z-octadecenoyl)-sn-glycero-3-phosphate + tetradecanoyl-CoA = 1-(9Z)-octadecenoyl-2-tetradecanoyl-sn-glycero-3-phosphate + CoA. It catalyses the reaction 1-(9Z-octadecenoyl)-sn-glycero-3-phosphate + hexadecanoyl-CoA = 1-(9Z)-octadecenoyl-2-hexadecanoyl-sn-glycero-3-phosphate + CoA. The catalysed reaction is 1-(9Z-octadecenoyl)-sn-glycero-3-phosphate + octadecanoyl-CoA = 1-(9Z-octadecenoyl)-2-octadecanoyl-sn-glycero-3-phosphate + CoA. It carries out the reaction 1-(9Z-octadecenoyl)-sn-glycero-3-phosphate + (9Z,12Z)-octadecadienoyl-CoA = 1-(9Z)-octadecenoyl-2-(9Z,12Z)-octadecadienoyl-sn-glycero-3-phosphate + CoA. The enzyme catalyses 1-(5Z,8Z,11Z,14Z-eicosatetraenoyl)-sn-glycero-3-phosphate + (9Z)-octadecenoyl-CoA = 1-(5Z,8Z,11Z,14Z)-eicosatetraenoyl-2-(9Z)-octadecenoyl-sn-glycero-3-phosphate + CoA. Its pathway is glycerolipid metabolism; triacylglycerol biosynthesis. It participates in phospholipid metabolism; CDP-diacylglycerol biosynthesis; CDP-diacylglycerol from sn-glycerol 3-phosphate: step 1/3. Its function is as follows. Converts glycerol-3-phosphate to 1-acyl-sn-glycerol-3-phosphate (lysophosphatidic acid or LPA) by incorporating an acyl moiety at the sn-1 position of the glycerol backbone. Also converts LPA into 1,2-diacyl-sn-glycerol-3-phosphate (phosphatidic acid or PA) by incorporating an acyl moiety at the sn-2 position of the glycerol backbone. Protects cells against lipotoxicity. This Rattus norvegicus (Rat) protein is Glycerol-3-phosphate acyltransferase 3.